A 433-amino-acid polypeptide reads, in one-letter code: Trigger factor (433 aa).

The region spanning 163-248 is the PPIase FKBP-type domain; it reads GDVVVLDFAA…VHAVKERRLP (86 aa).

The protein belongs to the FKBP-type PPIase family. Tig subfamily.

The protein resides in the cytoplasm. It catalyses the reaction [protein]-peptidylproline (omega=180) = [protein]-peptidylproline (omega=0). Functionally, involved in protein export. Acts as a chaperone by maintaining the newly synthesized protein in an open conformation. Functions as a peptidyl-prolyl cis-trans isomerase. The sequence is that of Trigger factor from Nitratidesulfovibrio vulgaris (strain ATCC 29579 / DSM 644 / CCUG 34227 / NCIMB 8303 / VKM B-1760 / Hildenborough) (Desulfovibrio vulgaris).